The following is a 330-amino-acid chain: Probable pectinesterase 55 (330 aa).

Residues 1-24 form the signal peptide; the sequence is MGTHRIILGLAALCCFCLPHLIEA. Residues Asn38 and Asn52 are each glycosylated (N-linked (GlcNAc...) asparagine). Residue Asp161 is the Proton donor of the active site. Asp182 serves as the catalytic Nucleophile. Substrate is bound by residues Arg243 and Trp245. Asn257 and Asn292 each carry an N-linked (GlcNAc...) asparagine glycan.

The protein belongs to the pectinesterase family.

The protein resides in the secreted. It localises to the cell wall. It catalyses the reaction [(1-&gt;4)-alpha-D-galacturonosyl methyl ester](n) + n H2O = [(1-&gt;4)-alpha-D-galacturonosyl](n) + n methanol + n H(+). It functions in the pathway glycan metabolism; pectin degradation; 2-dehydro-3-deoxy-D-gluconate from pectin: step 1/5. Functionally, acts in the modification of cell walls via demethylesterification of cell wall pectin. In Arabidopsis thaliana (Mouse-ear cress), this protein is Probable pectinesterase 55 (PME55).